The following is a 230-amino-acid chain: Ribonuclease HII (230 aa).

One can recognise an RNase H type-2 domain in the interval 28 to 217 (FRIAGIDEAG…VKEHLPSQPD (190 aa)). A divalent metal cation is bound by residues Asp-34, Glu-35, and Asp-126. Positions 209–230 (KEHLPSQPDSDTAGPSTGLFSF) are disordered. Polar residues predominate over residues 215–230 (QPDSDTAGPSTGLFSF).

The protein belongs to the RNase HII family. Requires Mn(2+) as cofactor. The cofactor is Mg(2+).

Its subcellular location is the cytoplasm. It catalyses the reaction Endonucleolytic cleavage to 5'-phosphomonoester.. Its function is as follows. Endonuclease that specifically degrades the RNA of RNA-DNA hybrids. The chain is Ribonuclease HII from Citrifermentans bemidjiense (strain ATCC BAA-1014 / DSM 16622 / JCM 12645 / Bem) (Geobacter bemidjiensis).